The chain runs to 269 residues: GTP cyclohydrolase FolE2 (269 aa).

Belongs to the GTP cyclohydrolase IV family.

The enzyme catalyses GTP + H2O = 7,8-dihydroneopterin 3'-triphosphate + formate + H(+). The protein operates within cofactor biosynthesis; 7,8-dihydroneopterin triphosphate biosynthesis; 7,8-dihydroneopterin triphosphate from GTP: step 1/1. Converts GTP to 7,8-dihydroneopterin triphosphate. The chain is GTP cyclohydrolase FolE2 from Azoarcus sp. (strain BH72).